Here is a 387-residue protein sequence, read N- to C-terminus: Involucrin (387 aa).

Disordered regions lie at residues 1-319 (MSQQ…VHLG) and 347-387 (VCIP…LKQE). A compositionally biased stretch (polar residues) spans 28–37 (NTQQDQMKQP). Residues 62 to 71 (QVPEQECEPQ) show a composition bias toward low complexity. 4 stretches are compositionally biased toward basic and acidic residues: residues 85 to 96 (KQQEPQEQEVHP), 104 to 115 (QEQEAHLGKKQE), 147 to 179 (QEVH…KQLQ), and 231 to 245 (QLEK…ELHL).

This sequence belongs to the involucrin family. As to quaternary structure, directly or indirectly cross-linked to cornifelin (CNFN). Substrate of transglutaminase. Specific glutamines or lysines are cross-linked to keratins, desmoplakin and to inter involucrin molecules. Keratinocytes of epidermis and other stratified squamous epithelia.

The protein resides in the cytoplasm. In terms of biological role, part of the insoluble cornified cell envelope (CE) of stratified squamous epithelia. In Cephalopachus bancanus (Western tarsier), this protein is Involucrin (IVL).